We begin with the raw amino-acid sequence, 493 residues long: Geraniol 8-hydroxylase (493 aa).

At 1-6 the chain is on the lumenal side; it reads MDYLTI. Residues 7 to 23 traverse the membrane as a helical segment; sequence ILTLLFALTLYEAFSYL. At 24–493 the chain is on the cytoplasmic side; sequence SRRTKNLPPG…HPLRAVPSTL (470 aa). Residue Cys436 participates in heme binding.

Belongs to the cytochrome P450 family. The cofactor is heme. As to expression, expressed in roots, stems, leaves and flower buds. Hardly detected in mature flowers and fruits. Expressed in the internal phloem-associated parenchyma.

It localises to the endoplasmic reticulum membrane. It carries out the reaction (2E)-geraniol + reduced [NADPH--hemoprotein reductase] + O2 = (6E)-8-hydroxygeraniol + oxidized [NADPH--hemoprotein reductase] + H2O + H(+). In terms of biological role, hydroxylase involved in the biosynthesis of hydroxygeraniol, a precursor of the terpenoid indole alkaloids such as vinblastine and vincristine. Also able to hydroxylate in vitro nerol and to catalyze 3'-hydroxylation of the flavanone naringenin to form eriodictyol. No activity with apigenin, kaempferol, p-coumaric acid and ferulic acid as substrates. In Catharanthus roseus (Madagascar periwinkle), this protein is Geraniol 8-hydroxylase (CYP76B6).